Reading from the N-terminus, the 187-residue chain is Oleosin Zm-II (187 aa).

Ala-2 is modified (N-acetylalanine). Positions 2–51 are polar; sequence ADRDRSGIYGGAHATYGQQQQQGGGGRPMGEQVKKGMLHDKGPTASQALT. Residues 17-42 form a disordered region; sequence YGQQQQQGGGGRPMGEQVKKGMLHDK. Basic and acidic residues predominate over residues 33–42; the sequence is QVKKGMLHDK. The next 3 helical transmembrane spans lie at 50–70, 83–103, and 104–124; these read LTVATLFPLGGLLLVLSGLAL, VFLIFSPVLVPAALLIGTAVM, and GFLTSGALGLGGLSSLTCLAN. Positions 52–123 are hydrophobic; that stretch reads VATLFPLGGL…GGLSSLTCLA (72 aa). Residues 155 to 169 are compositionally biased toward low complexity; the sequence is TAQAGQAIQGRAQEA. The disordered stretch occupies residues 155–187; sequence TAQAGQAIQGRAQEAGTGGGAGAGAGGGGRASS. Positions 170–187 are enriched in gly residues; sequence GTGGGAGAGAGGGGRASS.

It belongs to the oleosin family. The N-terminus is blocked. As to expression, found in embryonic axis, scutellum, and aleurone layer.

The protein resides in the lipid droplet. The protein localises to the membrane. Its function is as follows. May have a structural role to stabilize the lipid body during desiccation of the seed by preventing coalescence of the oil. Probably interacts with both lipid and phospholipid moieties of lipid bodies. May also provide recognition signals for specific lipase anchorage in lipolysis during seedling growth. This is Oleosin Zm-II (OLE18) from Zea mays (Maize).